The primary structure comprises 242 residues: DNA repair protein RecO (242 aa).

Belongs to the RecO family.

Involved in DNA repair and RecF pathway recombination. The protein is DNA repair protein RecO of Paracoccus denitrificans (strain Pd 1222).